A 71-amino-acid chain; its full sequence is MIFKVFYQENADEVPVREKTKTLYIEAESERDVRRKLQDRSINIEYIQPLEGAHLEYEKQSPNFQVLEISS.

The protein belongs to the RNA polymerase subunit epsilon family. In terms of assembly, RNAP is composed of a core of 2 alpha, a beta and a beta' subunit. The core is associated with a delta subunit, and at least one of epsilon or omega. When a sigma factor is associated with the core the holoenzyme is formed, which can initiate transcription.

The enzyme catalyses RNA(n) + a ribonucleoside 5'-triphosphate = RNA(n+1) + diphosphate. In terms of biological role, a non-essential component of RNA polymerase (RNAP). The polypeptide is DNA-directed RNA polymerase subunit epsilon (Geobacillus thermodenitrificans (strain NG80-2)).